Consider the following 438-residue polypeptide: Phosphatidylserine decarboxylase proenzyme 1, mitochondrial (438 aa).

The N-terminal 21 residues, 1–21 (MRRFRVWPPSPSPWPLLASRP), are a transit peptide targeting the mitochondrion. Residues 22-48 (CPHSHHHRSPFHASANSGARQGNFILP) lie on the Mitochondrial matrix side of the membrane. A helical transmembrane segment spans residues 49–67 (GATAATLVMFGILHARRMY). Residues 68-438 (EDQKVVERKE…EAIGRWTSRE (371 aa)) are Mitochondrial intermembrane-facing. Residues aspartate 173, histidine 273, and serine 387 each act as charge relay system; for autoendoproteolytic cleavage activity in the active site. Residue serine 387 is the Schiff-base intermediate with substrate; via pyruvic acid; for decarboxylase activity of the active site. A Pyruvic acid (Ser); by autocatalysis modification is found at serine 387.

The protein belongs to the phosphatidylserine decarboxylase family. PSD-B subfamily. Eukaryotic type I sub-subfamily. In terms of assembly, heterodimer of a large membrane-associated beta subunit and a small pyruvoyl-containing alpha subunit. Pyruvate serves as cofactor. Is synthesized initially as an inactive proenzyme. Formation of the active enzyme involves a self-maturation process in which the active site pyruvoyl group is generated from an internal serine residue via an autocatalytic post-translational modification. Two non-identical subunits are generated from the proenzyme in this reaction, and the pyruvate is formed at the N-terminus of the alpha chain, which is derived from the carboxyl end of the proenzyme. The autoendoproteolytic cleavage occurs by a canonical serine protease mechanism, in which the side chain hydroxyl group of the serine supplies its oxygen atom to form the C-terminus of the beta chain, while the remainder of the serine residue undergoes an oxidative deamination to produce ammonia and the pyruvoyl prosthetic group on the alpha chain. During this reaction, the Ser that is part of the protease active site of the proenzyme becomes the pyruvoyl prosthetic group, which constitutes an essential element of the active site of the mature decarboxylase.

The protein localises to the mitochondrion inner membrane. The catalysed reaction is a 1,2-diacyl-sn-glycero-3-phospho-L-serine + H(+) = a 1,2-diacyl-sn-glycero-3-phosphoethanolamine + CO2. The protein operates within phospholipid metabolism; phosphatidylethanolamine biosynthesis; phosphatidylethanolamine from CDP-diacylglycerol: step 2/2. Functionally, catalyzes the formation of phosphatidylethanolamine (PtdEtn) from phosphatidylserine (PtdSer). Plays a central role in phospholipid metabolism and in the interorganelle trafficking of phosphatidylserine. The sequence is that of Phosphatidylserine decarboxylase proenzyme 1, mitochondrial (PSD1) from Oryza sativa subsp. japonica (Rice).